Here is a 621-residue protein sequence, read N- to C-terminus: Kelch-like protein 6 (621 aa).

Residues 72-139 (TDVILCVDIQ…TYTSKALITK (68 aa)) form the BTB domain. The 103-residue stretch at 174–276 (CVGILRLADT…DPWYFVETVE (103 aa)) folds into the BACK domain. 6 Kelch repeats span residues 320–367 (VFMI…NKKW), 378–421 (EVYI…VLGG), 422–468 (KVYV…SHKK), 470–516 (LYVI…SFRD), 517–558 (RIYV…PCNN), and 560–606 (LYIT…TIRK).

Found in germinal center B-cells.

Functionally, involved in B-lymphocyte antigen receptor signaling and germinal center formation. The chain is Kelch-like protein 6 (KLHL6) from Homo sapiens (Human).